We begin with the raw amino-acid sequence, 413 residues long: MNRWEKELDKYAELAVKVGVNIQPGQTLFVNAPLEAAPLVRKIAKTAYETGAKHVYFEWNDEALTYIKFHHAPEEAFSEYPMLRARAMEELAEQGAAFLSIHAPNPDLLKDVDPKRIATANKTAAQALANYRSAIMADRNCWSLISVPTPAWAQKVFGDLRDEEAIDKLWEAIFRITRIDQDDPIAAWREHNDRLARIVDYLNNKQYKQLVYEAPGPIFTVELVDGHVWHGGAATSQSGVRFNPNIPTEEVFTMPHKDGVNGTVRNTKPLNYNGNVIDGFTLTFKDGQVVDFSAEQGYETLKHLLDTDDGARRLGEVALVPHQSPVSLSNLIFYNTLFDENAACHLALGKAYPTNIENGASLSKEELDRRGVNDSLVHVDFMIGSADLNIDGVTKDGKREPIFRSGNWAFELA.

A divalent metal cation is bound by residues E250, E316, E340, H345, H378, and D380.

It belongs to the peptidase M29 family. In terms of assembly, homodimer. Co(2+) serves as cofactor. It depends on Zn(2+) as a cofactor. Requires Mg(2+) as cofactor.

Broad specificity metal-dependent exopeptidase, releasing all N-terminal amino acids. The polypeptide is Aminopeptidase 2 (Geobacillus stearothermophilus (Bacillus stearothermophilus)).